The sequence spans 288 residues: ATP synthase gamma chain (288 aa).

This sequence belongs to the ATPase gamma chain family. In terms of assembly, F-type ATPases have 2 components, CF(1) - the catalytic core - and CF(0) - the membrane proton channel. CF(1) has five subunits: alpha(3), beta(3), gamma(1), delta(1), epsilon(1). CF(0) has three main subunits: a, b and c.

Its subcellular location is the cell inner membrane. Produces ATP from ADP in the presence of a proton gradient across the membrane. The gamma chain is believed to be important in regulating ATPase activity and the flow of protons through the CF(0) complex. The protein is ATP synthase gamma chain of Vibrio parahaemolyticus serotype O3:K6 (strain RIMD 2210633).